Reading from the N-terminus, the 817-residue chain is Actin filament-associated protein 1-like 2 (817 aa).

The residue at position 56 (Tyr-56) is a Phosphotyrosine. Residues 63–164 are disordered; sequence HKQQNAESQD…KGKSAPHQWP (102 aa). Over residues 123–139 the composition is skewed to acidic residues; the sequence is YYEEAEPYDTSLNEDGE. 2 PH domains span residues 175–271 and 353–447; these read DARI…EVSG and SLET…SESG. Ser-408 bears the Phosphoserine mark. At Tyr-413 the chain carries Phosphotyrosine. Ser-484 is subject to Phosphoserine. The span at 512-528 shows a compositional bias: low complexity; it reads TTAGEAPEEATPATDAP. Disordered stretches follow at residues 512-657 and 754-786; these read TTAG…KLGK and GTTV…VNSA. The stretch at 652–748 forms a coiled coil; that stretch reads EIKLGKNRTE…VKDSLRKAEA (97 aa). The segment covering 754–763 has biased composition (polar residues); sequence GTTVDTTHLE. Positions 767–782 are enriched in low complexity; that stretch reads PRPKAATPTPAPDCTP.

As to quaternary structure, interacts with SRC. Interacts with LCK when tyrosine phosphorylated. Tyrosine phosphorylated (by SRC).

Its subcellular location is the cytoplasm. In terms of biological role, may play a role in a signaling cascade by enhancing the kinase activity of SRC. Contributes to SRC-regulated transcription activation. The chain is Actin filament-associated protein 1-like 2 (AFAP1L2) from Bos taurus (Bovine).